A 441-amino-acid polypeptide reads, in one-letter code: Glutamyl-tRNA reductase (441 aa).

Substrate is bound by residues Thr64 to Arg67, Ser123, Glu128 to Gln130, and Gln134. The Nucleophile role is filled by Cys65. Gly203–Ile208 contributes to the NADP(+) binding site.

The protein belongs to the glutamyl-tRNA reductase family. As to quaternary structure, homodimer.

The catalysed reaction is (S)-4-amino-5-oxopentanoate + tRNA(Glu) + NADP(+) = L-glutamyl-tRNA(Glu) + NADPH + H(+). It functions in the pathway porphyrin-containing compound metabolism; protoporphyrin-IX biosynthesis; 5-aminolevulinate from L-glutamyl-tRNA(Glu): step 1/2. Its function is as follows. Catalyzes the NADPH-dependent reduction of glutamyl-tRNA(Glu) to glutamate 1-semialdehyde (GSA). The protein is Glutamyl-tRNA reductase of Burkholderia pseudomallei (strain K96243).